The following is a 52-amino-acid chain: Rubredoxin-2 (52 aa).

Residues 1–52 enclose the Rubredoxin-like domain; sequence MEQWKCNICGYIYNPETGDPEGDIPAGTSFESLPDSWMCPVCGAGKEEFTKI. Residues cysteine 6, cysteine 9, cysteine 39, and cysteine 42 each coordinate Fe cation.

The protein belongs to the rubredoxin family. Monomer. Requires Fe(3+) as cofactor.

Serves as an electron acceptor for pyruvate ferredoxin oxidoreductase (PFOR). This chain is Rubredoxin-2 (rub2), found in Chlorobaculum tepidum (strain ATCC 49652 / DSM 12025 / NBRC 103806 / TLS) (Chlorobium tepidum).